The chain runs to 302 residues: Nucleotide-binding protein Bcenmc03_2806 (302 aa).

8 to 15 provides a ligand contact to ATP; sequence GISGSGKS. 57-60 provides a ligand contact to GTP; it reads DARS.

This sequence belongs to the RapZ-like family.

Its function is as follows. Displays ATPase and GTPase activities. The chain is Nucleotide-binding protein Bcenmc03_2806 from Burkholderia orbicola (strain MC0-3).